Consider the following 286-residue polypeptide: Homoserine kinase (286 aa).

78 to 88 is an ATP binding site; the sequence is PVAHGLGSSSS.

It belongs to the GHMP kinase family. Homoserine kinase subfamily.

The protein localises to the cytoplasm. It carries out the reaction L-homoserine + ATP = O-phospho-L-homoserine + ADP + H(+). Its pathway is amino-acid biosynthesis; L-threonine biosynthesis; L-threonine from L-aspartate: step 4/5. In terms of biological role, catalyzes the ATP-dependent phosphorylation of L-homoserine to L-homoserine phosphate. The protein is Homoserine kinase of Limosilactobacillus fermentum (strain NBRC 3956 / LMG 18251) (Lactobacillus fermentum).